The primary structure comprises 251 residues: MSGHSKWATIKHAKGAADAKRGQLFTKLSREIIFAAKQGGPSPEGNARLRLAIQKAKDSRMPSDNIERAIKKGSGELEGTTVIEMILEGYGPGGVAVLVNGMSDNRNRTVSDVRHMFSKGGGSLAESGAVSWIFEAKGVIGVETARLDTDELSLKAIDMGAEDVNTDEGYMEIYTAMPDMEKIRQQLETQGVTIDSAEINMVPKNTVKLDEETAMQVLKLLDKLEELDDVQTVSSNADFDPEVVEKYHSQA.

The protein belongs to the TACO1 family.

It localises to the cytoplasm. This chain is Probable transcriptional regulatory protein DehaBAV1_0421, found in Dehalococcoides mccartyi (strain ATCC BAA-2100 / JCM 16839 / KCTC 5957 / BAV1).